The sequence spans 208 residues: TnpB-like protein MJ0012 (208 aa).

Cys83, Cys86, Cys100, and Cys103 together coordinate Zn(2+).

It belongs to the transposase 35 family.

In Methanocaldococcus jannaschii (strain ATCC 43067 / DSM 2661 / JAL-1 / JCM 10045 / NBRC 100440) (Methanococcus jannaschii), this protein is TnpB-like protein MJ0012.